Consider the following 683-residue polypeptide: Methionine--tRNA ligase (683 aa).

The 'HIGH' region motif lies at 15–25 (PYANGPIHLGH). Zn(2+)-binding residues include Cys-146, Cys-149, Cys-159, and Cys-162. Residues 332 to 336 (KMSKS) carry the 'KMSKS' region motif. Lys-335 contributes to the ATP binding site. One can recognise a tRNA-binding domain in the interval 581-683 (DFFKVDLRVA…AGAKAGQRVK (103 aa)).

Belongs to the class-I aminoacyl-tRNA synthetase family. MetG type 1 subfamily. As to quaternary structure, homodimer. Requires Zn(2+) as cofactor.

The protein localises to the cytoplasm. It catalyses the reaction tRNA(Met) + L-methionine + ATP = L-methionyl-tRNA(Met) + AMP + diphosphate. In terms of biological role, is required not only for elongation of protein synthesis but also for the initiation of all mRNA translation through initiator tRNA(fMet) aminoacylation. This chain is Methionine--tRNA ligase, found in Histophilus somni (strain 129Pt) (Haemophilus somnus).